We begin with the raw amino-acid sequence, 183 residues long: Ribosome rescue factor SmrB (183 aa).

Positions 98-173 (LDLHGLTQLQ…GDAALLVLIE (76 aa)) constitute a Smr domain.

Belongs to the SmrB family. In terms of assembly, associates with collided ribosomes, but not with correctly translating polysomes.

Its function is as follows. Acts as a ribosome collision sensor. Detects stalled/collided disomes (pairs of ribosomes where the leading ribosome is stalled and a second ribosome has collided with it) and endonucleolytically cleaves mRNA at the 5' boundary of the stalled ribosome. Stalled/collided disomes form a new interface (primarily via the 30S subunits) that binds SmrB. Cleaved mRNA becomes available for tmRNA ligation, leading to ribosomal subunit dissociation and rescue of stalled ribosomes. This is Ribosome rescue factor SmrB from Shigella dysenteriae serotype 1 (strain Sd197).